We begin with the raw amino-acid sequence, 488 residues long: PPE family protein PPE10 (488 aa).

Disordered stretches follow at residues 207–232 (NNNW…NIGS) and 443–488 (SDAG…LRTE).

This sequence belongs to the mycobacterial PPE family.

The protein localises to the secreted. Plays a major role in the integrity and stability of the capsule. This Mycobacterium marinum (strain ATCC BAA-535 / M) protein is PPE family protein PPE10.